We begin with the raw amino-acid sequence, 204 residues long: MKETRSKQPDITPDMLLRAYSIGLFPMADSADDPELFWVEPEIRGIIPLDRFHVSRSLAKVIRRRPFDIRFDTAFSEVIEGCAQRAPDRPTTWINDTIRALYAALHKMGHAHSVEAWEGDTLVGGLYGVSLGAAFFGESMFSRRTDASKICLVHLVQRLRSKGFQLLDTQFTTEHLKSFGAVDVPKVEYEVLLAKAIASPNLDF.

This sequence belongs to the L/F-transferase family.

It is found in the cytoplasm. The catalysed reaction is N-terminal L-lysyl-[protein] + L-leucyl-tRNA(Leu) = N-terminal L-leucyl-L-lysyl-[protein] + tRNA(Leu) + H(+). It catalyses the reaction N-terminal L-arginyl-[protein] + L-leucyl-tRNA(Leu) = N-terminal L-leucyl-L-arginyl-[protein] + tRNA(Leu) + H(+). The enzyme catalyses L-phenylalanyl-tRNA(Phe) + an N-terminal L-alpha-aminoacyl-[protein] = an N-terminal L-phenylalanyl-L-alpha-aminoacyl-[protein] + tRNA(Phe). Functionally, functions in the N-end rule pathway of protein degradation where it conjugates Leu, Phe and, less efficiently, Met from aminoacyl-tRNAs to the N-termini of proteins containing an N-terminal arginine or lysine. In Sinorhizobium medicae (strain WSM419) (Ensifer medicae), this protein is Leucyl/phenylalanyl-tRNA--protein transferase.